The chain runs to 758 residues: Relaxin receptor 1 (758 aa).

Residues 1 to 409 (MTSGPFFFCI…ENLLASIIQR (409 aa)) are Extracellular-facing. The LDL-receptor class A domain maps to 26-63 (SCPLGSFPCGNMSRCLPQLLHCNGVDDCGNRADEDHCG). 3 cysteine pairs are disulfide-bonded: Cys-27/Cys-40, Cys-34/Cys-53, and Cys-47/Cys-62. Residue Asn-36 is glycosylated (N-linked (GlcNAc...) asparagine). Ca(2+) contacts are provided by Leu-45, Asn-48, Val-50, Asp-52, Asp-58, and Glu-59. A glycan (N-linked (GlcNAc...) asparagine) is linked at Asn-127. LRR repeat units follow at residues 127-148 (NVTV…GFRK), 151-172 (ELQK…AFRG), 175-196 (SLTK…VFED), 199-220 (RLEW…TFYG), 223-244 (SLIL…PLCQ), 248-269 (RLHW…TFIS), 272-293 (NLTV…AFTH), 296-317 (KLDE…IFKD), 320-341 (ELSQ…QFDC), and 344-365 (KLKS…MFRP). N-linked (GlcNAc...) asparagine glycosylation is found at Asn-264 and Asn-272. Asn-325 is a glycosylation site (N-linked (GlcNAc...) asparagine). Asn-368 is a glycosylation site (N-linked (GlcNAc...) asparagine). A helical membrane pass occupies residues 410-430 (VFVWVVSAITCFGNIFVICMR). The Cytoplasmic segment spans residues 431–443 (PYIRSENKLHAMS). A helical membrane pass occupies residues 444-464 (IISLCCADCLMGVYLFVIGAF). The Extracellular segment spans residues 465–486 (DLKFRGEYNKHAQPWMESVHCQ). Residues Cys-485 and Cys-563 are joined by a disulfide bond. Residues 487-507 (FMGSLAILSTEVSVLLLTFLT) traverse the membrane as a helical segment. The Cytoplasmic segment spans residues 508–527 (LEKYICIVYPFRCLRPRKCR). The helical transmembrane segment at 528-548 (TITVLIFIWIIGFIVAFAPLG) threads the bilayer. Over 549 to 577 (NKEFFKNYYGTNGVCFPLHSEDTGSTGAQ) the chain is Extracellular. A helical membrane pass occupies residues 578–598 (IYSVVIFLGINLVAFIIIVFS). At 599-629 (YGSMFYSVHQSSVTVTEIQKQVKKEVVLAKR) the chain is on the cytoplasmic side. A helical membrane pass occupies residues 630-650 (FFFIVFTDALCWIPIFILKFL). Residue Ser-651 is a topological domain, extracellular. A helical transmembrane segment spans residues 652-672 (LLQVEIPDSITSWVVIFILPI). Residues 673-758 (NSALNPIIYT…SQSSRLNSYS (86 aa)) lie on the Cytoplasmic side of the membrane.

This sequence belongs to the G-protein coupled receptor 1 family. Interacts with C1QTNF8.

The protein localises to the cell membrane. Receptor for relaxins. The activity of this receptor is mediated by G proteins leading to stimulation of adenylate cyclase and an increase of cAMP. Binding of the ligand may also activate a tyrosine kinase pathway that inhibits the activity of a phosphodiesterase that degrades cAMP. The chain is Relaxin receptor 1 (Rxfp1) from Mus musculus (Mouse).